We begin with the raw amino-acid sequence, 809 residues long: Eukaryotic translation initiation factor 3 subunit C (809 aa).

The segment at 1–102 (MSRFFAASYE…DSDESDEASK (102 aa)) is disordered. Composition is skewed to acidic residues over residues 18 to 30 (SEED…EEEL) and 37 to 59 (SEEE…DSDD). Residues 605–780 (FHEHINLDLI…SVLSIAKGAE (176 aa)) enclose the PCI domain.

Belongs to the eIF-3 subunit C family. As to quaternary structure, component of the eukaryotic translation initiation factor 3 (eIF-3) complex.

It is found in the cytoplasm. Component of the eukaryotic translation initiation factor 3 (eIF-3) complex, which is involved in protein synthesis of a specialized repertoire of mRNAs and, together with other initiation factors, stimulates binding of mRNA and methionyl-tRNAi to the 40S ribosome. The eIF-3 complex specifically targets and initiates translation of a subset of mRNAs involved in cell proliferation. The protein is Eukaryotic translation initiation factor 3 subunit C of Vanderwaltozyma polyspora (strain ATCC 22028 / DSM 70294 / BCRC 21397 / CBS 2163 / NBRC 10782 / NRRL Y-8283 / UCD 57-17) (Kluyveromyces polysporus).